A 416-amino-acid polypeptide reads, in one-letter code: MDVIVRKGEIRGKAKPPASKSYTHRAFIAASLSPSARVVNPLISEDTISTLNACKRIGAAVLKKGNEWLFSGVDGVEAEGYFNFANSGTTLRIFTGLLSLSPFRSVVDGDESLRKRPNGELVLALSKLGARFKGREPYTPPFSVQGVIKGGEVEIEAPSSQFVSSLLFALSLAEGDSSLRVEKVKSQPYIDVTLDVLRESGVKVEREGNFYHIPGSQSFKLRRYDVPADFSSASYLIAAGLIAGEVVLEGMFESAQGDRKIVDICREMGGSVEWDKKRGVIRAERSELEGVEVDASDIPDLVPTIAVLAAVAKGKTRIYNAEHLRIKEIDRIEGIHQNLKALGVESKPLKDGLIIKGGKGEFRGVVDSFGDHRMALAFSLLGLLGEVKCRNAEVVSVSFPGYFRVLESLGASVIRL.

Lysine 20, serine 21, and arginine 25 together coordinate 3-phosphoshikimate. Lysine 20 serves as a coordination point for phosphoenolpyruvate. Residues glycine 88 and arginine 116 each coordinate phosphoenolpyruvate. Residues serine 159, serine 160, glutamine 161, serine 186, aspartate 300, and lysine 327 each coordinate 3-phosphoshikimate. Glutamine 161 serves as a coordination point for phosphoenolpyruvate. Catalysis depends on aspartate 300, which acts as the Proton acceptor. The phosphoenolpyruvate site is built by arginine 331 and arginine 373.

This sequence belongs to the EPSP synthase family. As to quaternary structure, monomer.

Its subcellular location is the cytoplasm. The enzyme catalyses 3-phosphoshikimate + phosphoenolpyruvate = 5-O-(1-carboxyvinyl)-3-phosphoshikimate + phosphate. The protein operates within metabolic intermediate biosynthesis; chorismate biosynthesis. In terms of biological role, catalyzes the transfer of the enolpyruvyl moiety of phosphoenolpyruvate (PEP) to the 5-hydroxyl of shikimate-3-phosphate (S3P) to produce enolpyruvyl shikimate-3-phosphate and inorganic phosphate. This Archaeoglobus fulgidus (strain ATCC 49558 / DSM 4304 / JCM 9628 / NBRC 100126 / VC-16) protein is 3-phosphoshikimate 1-carboxyvinyltransferase.